Consider the following 614-residue polypeptide: Zinc metalloproteinase-disintegrin-like VLAIP-B (614 aa).

The signal sequence occupies residues 1-20 (MMQVLLVTICLAVFPYQGSS). A propeptide spanning residues 21-193 (IILESGNVND…KASQLNLTPE (173 aa)) is cleaved from the precursor. Q194 is subject to Pyrrolidone carboxylic acid. In terms of domain architecture, Peptidase M12B spans 202-398 (KYVELVIVAD…KMPQCILNKP (197 aa)). E205 provides a ligand contact to Ca(2+). N-linked (GlcNAc...) asparagine glycosylation is present at N262. A Ca(2+)-binding site is contributed by D289. Cystine bridges form between C313–C393, C353–C377, and C355–C360. H338 serves as a coordination point for Zn(2+). E339 is an active-site residue. Zn(2+)-binding residues include H342 and H348. Ca(2+)-binding residues include C393, N396, V408, N411, F413, E415, E418, and D421. In terms of domain architecture, Disintegrin spans 406-492 (PAVCGNYFVE…ECPTDQFQRN (87 aa)). Cystine bridges form between C409–C438, C420–C433, C422–C428, C432–C455, C446–C452, C451–C477, C464–C484, C471–C503, C496–C508, C515–C565, C530–C576, C543–C553, C560–C602, and C596–C607. Residues 470 to 472 (ECD) carry the D/ECD-tripeptide motif. N-linked (GlcNAc...) asparagine glycosylation is found at N505, N547, and N568.

This sequence belongs to the venom metalloproteinase (M12B) family. P-III subfamily. P-IIIc sub-subfamily. In terms of assembly, heterodimer; disulfide-linked. Zn(2+) serves as cofactor. The N-terminus is blocked. As to expression, expressed by the venom gland.

It localises to the secreted. Inhibited by EDTA or 1,10-phenanthroline. Not inhibited by PMSF. Functionally, this metalloproteinase hydrolyzes azocasein, and insulin B-chain (at the '38-Ala-|-Leu-39' bond). Also hydrolyzes the Aalpha-chain (FGA) and more slowly the Bbeta-chain of fibrinogen (FGB), without affecting the gamma-chain. Cleaves alpha-chain of fibrinogen at '432-Lys-|-Leu-433' and '535-Pro-|-Met-536' bonds. Does not cleave fibrin. Inhibits endothelial cell adhesion to extracellular matrix proteins such as fibrinogen, fibronectin, vitronectin, collagen I, and collagen IV. Induces apoptosis in vascular endothelial cells. The polypeptide is Zinc metalloproteinase-disintegrin-like VLAIP-B (Macrovipera lebetinus (Levantine viper)).